The chain runs to 381 residues: L-lactate dehydrogenase A-like 6B (381 aa).

Residues 101-106 (DVDEGR) and arginine 148 each bind NAD(+). The substrate site is built by arginine 155, asparagine 187, and arginine 218. NAD(+) is bound at residue asparagine 187. Histidine 242 serves as the catalytic Proton acceptor. Threonine 297 lines the substrate pocket.

The protein belongs to the LDH/MDH superfamily. LDH family.

It carries out the reaction (S)-lactate + NAD(+) = pyruvate + NADH + H(+). It functions in the pathway fermentation; pyruvate fermentation to lactate; (S)-lactate from pyruvate: step 1/1. This is L-lactate dehydrogenase A-like 6B (LDHAL6B) from Bos taurus (Bovine).